The primary structure comprises 620 residues: Endoglucanase 6 (620 aa).

The signal sequence occupies residues 1–22 (MEKFAPVAALLLLLLCFPVAFS). The active-site Nucleophile is Asp-78. Catalysis depends on residues His-411, Asp-463, and Glu-472. 2 N-linked (GlcNAc...) asparagine glycosylation sites follow: Asn-554 and Asn-564.

This sequence belongs to the glycosyl hydrolase 9 (cellulase E) family.

It localises to the secreted. The catalysed reaction is Endohydrolysis of (1-&gt;4)-beta-D-glucosidic linkages in cellulose, lichenin and cereal beta-D-glucans.. The sequence is that of Endoglucanase 6 from Arabidopsis thaliana (Mouse-ear cress).